The following is a 68-amino-acid chain: Conotoxin Pu5.5 (68 aa).

A signal peptide spans 1 to 22 (MRCVPVFIILLVLIASAPSVDA). The propeptide occupies 23 to 49 (RPQTKDDALASFRDSIKRHLQTLLDAR).

It belongs to the conotoxin T superfamily. Post-translationally, contains 2 disulfide bonds that can be either 'C1-C3, C2-C4' or 'C1-C4, C2-C3', since these disulfide connectivities have been observed for conotoxins with cysteine framework V (for examples, see AC P0DQQ7 and AC P81755). Expressed by the venom duct.

The protein resides in the secreted. The polypeptide is Conotoxin Pu5.5 (Conus pulicarius (Flea-bitten cone)).